We begin with the raw amino-acid sequence, 218 residues long: Large ribosomal subunit protein bL25 (218 aa).

Residues 186 to 218 (AVEEEVPAEDEEIMPEPEVIGEEDEGDEEEPEE) form a disordered region.

It belongs to the bacterial ribosomal protein bL25 family. CTC subfamily. In terms of assembly, part of the 50S ribosomal subunit; part of the 5S rRNA/L5/L18/L25 subcomplex. Contacts the 5S rRNA. Binds to the 5S rRNA independently of L5 and L18.

Its function is as follows. This is one of the proteins that binds to the 5S RNA in the ribosome where it forms part of the central protuberance. This Halothermothrix orenii (strain H 168 / OCM 544 / DSM 9562) protein is Large ribosomal subunit protein bL25.